Consider the following 387-residue polypeptide: 8-amino-7-oxononanoate synthase (387 aa).

A substrate-binding site is contributed by Arg-20. 107-108 is a binding site for pyridoxal 5'-phosphate; it reads GY. Position 132 (His-132) interacts with substrate. Ser-181, His-209, and Thr-238 together coordinate pyridoxal 5'-phosphate. Lys-241 carries the post-translational modification N6-(pyridoxal phosphate)lysine. Thr-355 lines the substrate pocket.

This sequence belongs to the class-II pyridoxal-phosphate-dependent aminotransferase family. BioF subfamily. In terms of assembly, homodimer. Requires pyridoxal 5'-phosphate as cofactor.

It carries out the reaction 6-carboxyhexanoyl-[ACP] + L-alanine + H(+) = (8S)-8-amino-7-oxononanoate + holo-[ACP] + CO2. Its pathway is cofactor biosynthesis; biotin biosynthesis. Functionally, catalyzes the decarboxylative condensation of pimeloyl-[acyl-carrier protein] and L-alanine to produce 8-amino-7-oxononanoate (AON), [acyl-carrier protein], and carbon dioxide. This Dechloromonas aromatica (strain RCB) protein is 8-amino-7-oxononanoate synthase.